The following is a 220-amino-acid chain: HTH-type transcriptional repressor GlaR (220 aa).

Residues 1–69 form the HTH gntR-type domain; the sequence is MTITSLDGYR…NQKGYRVASM (69 aa). A DNA-binding region (H-T-H motif) is located at residues 29 to 48; that stretch reads MSLLTSRYALGVGPLREALS.

It localises to the cytoplasm. The repressive effect at the glaH promoter site is specifically relieved upon glutarate binding. In terms of biological role, negatively regulates the expression of the glaH-lhgD-gabDTP operon in a temporal manner during entry into stationary phase or during the first few hours of carbon starvation. Thereby is involved in the regulation of a L-lysine degradation pathway that proceeds via cadaverine, glutarate and L-2-hydroxyglutarate. Binds to two primary and two secondary sites in the promoter region of the glaH operon with the consensus sequences TTGTN5TTTT and ATGTN5TTTT of the primary sites, each separated by six nucleotides. This chain is HTH-type transcriptional repressor GlaR, found in Escherichia coli (strain K12).